The sequence spans 702 residues: Pentatricopeptide repeat-containing protein At4g16390, chloroplastic (702 aa).

The transit peptide at 1–53 (MSFHHLCSSPSSLLHDPLPLCNLLSVYPKSTPRSFLSSYNPNSSHFHSRNLLQ) directs the protein to the chloroplast. PPR repeat units follow at residues 174 to 208 (EVIL…GIKP), 209 to 243 (DNAT…GCEP), 244 to 278 (DNVT…KWRI), 279 to 313 (DAVT…GVKP), 314 to 348 (NLVI…GFTP), 349 to 383 (NWST…GLSL), 384 to 414 (TVIL…MKNC), 420 to 454 (DSWT…GFEP), and 455 to 489 (TLFV…GITP). Residues 603 to 688 (LHLKSLSLGA…WFLTTSVAAK (86 aa)) enclose the Smr domain.

Belongs to the PPR family. P subfamily. As to expression, expressed in leaves and flowers and at lower levels in stems and flower buds.

Its subcellular location is the plastid. The protein localises to the chloroplast. In terms of biological role, involved in chloroplast RNA processing. Can bind RNA. Involved in chloroplast development. Involved in chloroplast ribosomal RNA (rRNA) processing and/or translation. Required for FtsH-mediated chloroplast biogenesis. Involved in translation and accumulation of chloroplast ATP synthase subunits. The chain is Pentatricopeptide repeat-containing protein At4g16390, chloroplastic from Arabidopsis thaliana (Mouse-ear cress).